The sequence spans 257 residues: Small ribosomal subunit protein uS3 (257 aa).

Residues isoleucine 39–arginine 112 enclose the KH type-2 domain. Positions histidine 217–asparagine 257 are disordered. Over residues glycine 234–arginine 245 the composition is skewed to basic residues.

This sequence belongs to the universal ribosomal protein uS3 family. As to quaternary structure, part of the 30S ribosomal subunit. Forms a tight complex with proteins S10 and S14.

Binds the lower part of the 30S subunit head. Binds mRNA in the 70S ribosome, positioning it for translation. This chain is Small ribosomal subunit protein uS3, found in Haploplasma axanthum (Acholeplasma axanthum).